The chain runs to 287 residues: ATP synthase gamma chain (287 aa).

Belongs to the ATPase gamma chain family. F-type ATPases have 2 components, CF(1) - the catalytic core - and CF(0) - the membrane proton channel. CF(1) has five subunits: alpha(3), beta(3), gamma(1), delta(1), epsilon(1). CF(0) has three main subunits: a, b and c.

The protein localises to the cell inner membrane. Produces ATP from ADP in the presence of a proton gradient across the membrane. The gamma chain is believed to be important in regulating ATPase activity and the flow of protons through the CF(0) complex. This is ATP synthase gamma chain from Colwellia psychrerythraea (strain 34H / ATCC BAA-681) (Vibrio psychroerythus).